The primary structure comprises 582 residues: Hydrogen peroxide stress regulator 1 (582 aa).

Disordered stretches follow at residues 24 to 55 (SPFA…HNSS), 107 to 154 (YPSA…GISK), 347 to 366 (TSYN…SGET), and 375 to 422 (NTSG…GGKS). Residues 107–125 (YPSASFSTSQHPSQVYNDG) are compositionally biased toward polar residues. Residues 126–143 (STLNSNNTTQQLNNNNGF) are compositionally biased toward low complexity. The segment covering 375–392 (NTSGRSPNSMEATEQIGT) has biased composition (polar residues). A C2H2-type 1 zinc finger spans residues 423-446 (FVCPECSKKFKRSEHLRRHIRSLH). A C2H2-type 2; atypical zinc finger spans residues 452 to 473 (FVCICGKRFSRRDNLRQHERLH).

It is found in the nucleus. Its function is as follows. Transcription factor that globally supports gene expression in response to hydrogen peroxide. The sequence is that of Hydrogen peroxide stress regulator 1 (hsr1) from Schizosaccharomyces pombe (strain 972 / ATCC 24843) (Fission yeast).